The chain runs to 442 residues: tRNA modification GTPase MnmE (442 aa).

3 residues coordinate (6S)-5-formyl-5,6,7,8-tetrahydrofolate: arginine 27, glutamate 84, and lysine 124. The TrmE-type G domain occupies 221–366 (GLHVVIVGAP…LLDALQAFAE (146 aa)). Residues 231–236 (NAGKSS), 250–256 (SKEAGTT), and 275–278 (DTAG) each bind GTP. Mg(2+) contacts are provided by serine 235 and threonine 256. Lysine 442 is a (6S)-5-formyl-5,6,7,8-tetrahydrofolate binding site.

Belongs to the TRAFAC class TrmE-Era-EngA-EngB-Septin-like GTPase superfamily. TrmE GTPase family. Homodimer. Heterotetramer of two MnmE and two MnmG subunits. K(+) serves as cofactor.

The protein localises to the cytoplasm. Exhibits a very high intrinsic GTPase hydrolysis rate. Involved in the addition of a carboxymethylaminomethyl (cmnm) group at the wobble position (U34) of certain tRNAs, forming tRNA-cmnm(5)s(2)U34. The polypeptide is tRNA modification GTPase MnmE (Brucella canis (strain ATCC 23365 / NCTC 10854 / RM-666)).